A 1024-amino-acid chain; its full sequence is Beta-galactosidase (1024 aa).

2 residues coordinate substrate: Asn-103 and Asp-202. Asp-202 provides a ligand contact to Na(+). Residues Glu-417, His-419, and Glu-462 each coordinate Mg(2+). Residues Glu-462 and Glu-538–His-541 contribute to the substrate site. The active-site Proton donor is the Glu-462. Residue Glu-538 is the Nucleophile of the active site. Residue Asn-598 coordinates Mg(2+). Residues Phe-602 and Asn-605 each coordinate Na(+). Residues Asn-605 and Trp-1000 each contribute to the substrate site.

Belongs to the glycosyl hydrolase 2 family. In terms of assembly, homotetramer. Mg(2+) serves as cofactor. The cofactor is Na(+).

It carries out the reaction Hydrolysis of terminal non-reducing beta-D-galactose residues in beta-D-galactosides.. This chain is Beta-galactosidase, found in Escherichia coli O9:H4 (strain HS).